The primary structure comprises 160 residues: Lipoprotein signal peptidase (160 aa).

3 consecutive transmembrane segments (helical) span residues 7 to 27, 61 to 81, and 91 to 111; these read VIYY…KWLV, GQFW…IIYI, and AGIG…DRVF. Active-site residues include aspartate 117 and aspartate 135. A helical transmembrane segment spans residues 133-153; the sequence is IADSALTVGVILLFIHMFFFA.

It belongs to the peptidase A8 family.

Its subcellular location is the cell membrane. It catalyses the reaction Release of signal peptides from bacterial membrane prolipoproteins. Hydrolyzes -Xaa-Yaa-Zaa-|-(S,diacylglyceryl)Cys-, in which Xaa is hydrophobic (preferably Leu), and Yaa (Ala or Ser) and Zaa (Gly or Ala) have small, neutral side chains.. Its pathway is protein modification; lipoprotein biosynthesis (signal peptide cleavage). In terms of biological role, this protein specifically catalyzes the removal of signal peptides from prolipoproteins. In Geobacillus thermodenitrificans (strain NG80-2), this protein is Lipoprotein signal peptidase.